The primary structure comprises 130 residues: Small ribosomal subunit protein uS11c (130 aa).

Belongs to the universal ribosomal protein uS11 family. In terms of assembly, part of the 30S ribosomal subunit.

Its subcellular location is the plastid. The protein localises to the chloroplast. The protein is Small ribosomal subunit protein uS11c of Stigeoclonium helveticum (Green alga).